We begin with the raw amino-acid sequence, 512 residues long: Gamma-aminobutyric acid receptor subunit beta-2 (512 aa).

Positions 1-25 are cleaved as a signal peptide; the sequence is MWRVRKRGYFGIWSFPLIIAAVCAQ. Topologically, residues 26-244 are extracellular; sequence SVNDPSNMSL…SFKLKRNIGY (219 aa). Residues asparagine 32 and asparagine 104 are each glycosylated (N-linked (GlcNAc...) asparagine). Tyrosine 121 contacts histamine. A disulfide bridge connects residues cysteine 160 and cysteine 174. Asparagine 173 carries N-linked (GlcNAc...) asparagine glycosylation. Residues 180–181 and threonine 226 contribute to the histamine site; that span reads SY. 4-aminobutanoate contacts are provided by tyrosine 181 and threonine 226. A run of 3 helical transmembrane segments spans residues 245–266, 270–292, and 304–326; these read FILQ…SFWI, ASAA…NTHL, and AIDM…YALV. At 327–489 the chain is on the cytoplasmic side; that stretch reads NYIFFGRGPQ…DLTDVNAIDR (163 aa). A Phosphotyrosine modification is found at tyrosine 441. A helical transmembrane segment spans residues 490 to 511; the sequence is WSRIFFPVVFSFFNIVYWLYYV.

Belongs to the ligand-gated ion channel (TC 1.A.9) family. Gamma-aminobutyric acid receptor (TC 1.A.9.5) subfamily. GABRB2 sub-subfamily. In terms of assembly, heteropentamer, formed by a combination of alpha (GABRA1-6), beta (GABRB1-3), gamma (GABRG1-3), delta (GABRD), epsilon (GABRE), rho (GABRR1-3), pi (GABRP) and theta (GABRQ) chains, each subunit exhibiting distinct physiological and pharmacological properties. Interacts with UBQLN1. May interact with KIF21B. Identified in a complex of 720 kDa composed of LHFPL4, NLGN2, GABRA1, GABRB2, GABRG2 and GABRB3. In terms of processing, glycosylated.

It is found in the postsynaptic cell membrane. It localises to the cell membrane. Its subcellular location is the cytoplasmic vesicle. The enzyme catalyses chloride(in) = chloride(out). Allosterically activated by benzodiazepines and the anesthetic etomidate. Inhibited by the antagonist bicuculline. Potentiated by histamine. In terms of biological role, beta subunit of the heteropentameric ligand-gated chloride channel gated by gamma-aminobutyric acid (GABA), a major inhibitory neurotransmitter in the brain. GABA-gated chloride channels, also named GABA(A) receptors (GABAAR), consist of five subunits arranged around a central pore and contain GABA active binding site(s) located at the alpha and beta subunit interface(s). When activated by GABA, GABAARs selectively allow the flow of chloride anions across the cell membrane down their electrochemical gradient. Chloride influx into the postsynaptic neuron following GABAAR opening decreases the neuron ability to generate a new action potential, thereby reducing nerve transmission. GABAARs containing alpha-1 and beta-2 or -3 subunits exhibit synaptogenic activity; the gamma-2 subunit being necessary but not sufficient to induce rapid synaptic contacts formation. Extrasynaptic beta-2 receptors contribute to the tonic GABAergic inhibition. Beta-containing GABAARs can simultaneously bind GABA and histamine where histamine binds at the interface of two neighboring beta subunits, which may be involved in the regulation of sleep and wakefulness. This chain is Gamma-aminobutyric acid receptor subunit beta-2, found in Mus musculus (Mouse).